Reading from the N-terminus, the 355-residue chain is MSALGSRETHVLTTIIESYITSAAPVGSRTVSRRSGLALSPASMRNTMSDLTDMGFLEQPHTSAGRIPTPKAFRLYVDALLRQSARRDEAPLHMVEALHGHEPEVGALLRRASNLVSEHARQVSMVLAPGPAEARLRSLDFVPAGEGLVLAVLVLEGGMVRTRLVRDDTHFGSDELVRFGNYINAHYRGHTLSGIRNSIHHELSGGGAQLEAMCAQALALGSLALDSIDDDRELYVNGTRNILDQAEFAELGRMRELMDALEERSRLLELLDRTILEDDVHVTFYPDDVSGAAQRRAPDGLRGCSMVSAPYGGASPLGVIGVIGPVRMDYRKVLPLVGAVSRVLTQLLRERFATG.

Belongs to the HrcA family.

Functionally, negative regulator of class I heat shock genes (grpE-dnaK-dnaJ and groELS operons). Prevents heat-shock induction of these operons. The polypeptide is Heat-inducible transcription repressor HrcA (Nitratidesulfovibrio vulgaris (strain DP4) (Desulfovibrio vulgaris)).